A 287-amino-acid chain; its full sequence is Protease HtpX (287 aa).

The next 2 membrane-spanning stretches (helical) occupy residues 4 to 24 and 36 to 56; these read IMLF…VLNI and LSGL…ISLM. Histidine 143 is a Zn(2+) binding site. Glutamate 144 is an active-site residue. Residue histidine 147 participates in Zn(2+) binding. Transmembrane regions (helical) follow at residues 158 to 178 and 192 to 212; these read LMQG…ANIV and MVYF…ASFI. Glutamate 221 is a binding site for Zn(2+).

The protein belongs to the peptidase M48B family. The cofactor is Zn(2+).

It is found in the cell inner membrane. This is Protease HtpX from Vibrio parahaemolyticus serotype O3:K6 (strain RIMD 2210633).